A 522-amino-acid polypeptide reads, in one-letter code: Insulinoma-associated protein 1 (522 aa).

Residues 1-12 (MPRGFLVKRSKK) are compositionally biased toward basic residues. The SNAG domain stretch occupies residues 1 to 20 (MPRGFLVKRSKKSTPVSYRI). Disordered regions lie at residues 1–112 (MPRG…SREH) and 182–235 (AAEA…KPKA). The required and sufficient for interaction with KDM1A stretch occupies residues 2–7 (PRGFLV). The tract at residues 43 to 57 (PPAPGPGPVPGPLQP) is necessary for interaction with CCND1. The segment covering 43–61 (PPAPGPGPVPGPLQPPPPT) has biased composition (pro residues). 2 stretches are compositionally biased toward low complexity: residues 66–75 (AALAAALACA) and 212–228 (ASAA…AKAP). The segment at 277-297 (FICQLCKEEYADPFALAQHKC) adopts a C2H2-type 1; atypical zinc-finger fold. Residues 305–327 (YRCPECAKVFSCPANLASHRRWH) form a C2H2-type 2 zinc finger. The tract at residues 325-373 (RWHKPRPAPAAARACEPETPARAEAREATGGGGSDRDTPSPGGVSESGS) is disordered. The span at 339 to 351 (CEPETPARAEARE) shows a compositional bias: basic and acidic residues. 3 consecutive C2H2-type zinc fingers follow at residues 378-400 (YECH…LLAH), 453-476 (HLCP…RLLH), and 481-504 (FPCK…NKCH).

The protein belongs to the INSM1 family. Interacts (via the N-terminal region) with CCND1 (via cyclin N-terminal domain); the interaction competes with the binding of CCND1 to CDK4 during cell cycle progression and increases its transcriptional repressor activity. Interacts with HDAC3; the interaction increases its transcriptional repressor activity. Interacts (via the SNAG domain) with HDAC1. Interacts (via the SNAG domain) with HDAC2. Interacts (via the SNAG domain) with KDM1A. Interacts (via the SNAG domain) with RCOR1. Interacts with SORBS1.

Its subcellular location is the nucleus. Its function is as follows. Sequence-specific DNA-binding transcriptional regulator that plays a key role in neurogenesis and neuroendocrine cell differentiation during embryonic and/or fetal development. Binds to the consensus sequence 5'-[TG][TC][TC][TT][GA]GGG[CG]A-3' in target promoters. Acts as a transcriptional repressor of NEUROD1 and INS expression via its interaction with cyclin CCND1 in a cell cycle-independent manner. Negatively regulates skeletal muscle-specific gene expression in endocrine cells of the pituitary by inhibiting the Notch signaling pathway. Represses target gene transcription by recruiting chromatin-modifying factors, such as HDAC1, HDAC2, HDAC3, KDM1A and RCOR1 histone deacetylases. Binds to its own promoter, suggesting autoregulation as a self-control feedback mechanism. Competes with histone H3 for the same binding site on the histone demethylase complex formed by KDM1A and RCOR1, and thereby inhibits demethylation of histone H3 at 'Lys-4'. Promotes the generation and expansion of neuronal basal progenitor cells in the developing neocortex. Involved in the differentiation of endocrine cells of the developing anterior pituitary gland, of the pancreas and intestine, and of sympatho-adrenal cells in the peripheral nervous system. Promotes cell cycle signaling arrest and inhibition of cellular proliferation. The sequence is that of Insulinoma-associated protein 1 (INSM1) from Bos taurus (Bovine).